Consider the following 213-residue polypeptide: MSKLSDIRREYTLGGLHKEDLPGDPIELFSKWMEQARDSEVLSDPTAMSVATVDADGQPFQRIVLLKRFDKGGFVFFTNLESRKSQQIAINSKVSLLFPWHSLERQVAITGEAEPLSTAEVMKYFITRPKESQIAAWVSKQSSKISARQALESKFAEMKAKFSQGEVPLPKFWGGYIVKPTSIEFWQGGEHRLHDRFLYSKENSGWDISRLAP.

Substrate-binding positions include 8 to 11 and Lys67; that span reads RREY. Residues 62–67, 77–78, Arg83, Lys84, and Gln106 contribute to the FMN site; these read RIVLLK and FT. Substrate-binding residues include Tyr124, Arg128, and Ser132. Residues 141–142 and Trp186 contribute to the FMN site; that span reads QS. Residue 192–194 participates in substrate binding; sequence RLH. Arg196 contacts FMN.

The protein belongs to the pyridoxamine 5'-phosphate oxidase family. In terms of assembly, homodimer. FMN serves as cofactor.

The catalysed reaction is pyridoxamine 5'-phosphate + O2 + H2O = pyridoxal 5'-phosphate + H2O2 + NH4(+). It catalyses the reaction pyridoxine 5'-phosphate + O2 = pyridoxal 5'-phosphate + H2O2. It functions in the pathway cofactor metabolism; pyridoxal 5'-phosphate salvage; pyridoxal 5'-phosphate from pyridoxamine 5'-phosphate: step 1/1. The protein operates within cofactor metabolism; pyridoxal 5'-phosphate salvage; pyridoxal 5'-phosphate from pyridoxine 5'-phosphate: step 1/1. Functionally, catalyzes the oxidation of either pyridoxine 5'-phosphate (PNP) or pyridoxamine 5'-phosphate (PMP) into pyridoxal 5'-phosphate (PLP). In Shewanella sediminis (strain HAW-EB3), this protein is Pyridoxine/pyridoxamine 5'-phosphate oxidase.